Here is a 775-residue protein sequence, read N- to C-terminus: Cation channel sperm-associated protein subunit epsilon-like protein (775 aa).

Positions 1-20 are cleaved as a signal peptide; it reads MLARRVVAALLLWLSCCVSA. N-linked (GlcNAc...) asparagine glycans are attached at residues Asn-62 and Asn-114.

This sequence belongs to the CATSPERD family.

The sequence is that of Cation channel sperm-associated protein subunit epsilon-like protein from Mus musculus (Mouse).